Reading from the N-terminus, the 301-residue chain is Methionyl-tRNA formyltransferase (301 aa).

Residue 110 to 113 coordinates (6S)-5,6,7,8-tetrahydrofolate; it reads SLLP.

This sequence belongs to the Fmt family.

It catalyses the reaction L-methionyl-tRNA(fMet) + (6R)-10-formyltetrahydrofolate = N-formyl-L-methionyl-tRNA(fMet) + (6S)-5,6,7,8-tetrahydrofolate + H(+). Functionally, attaches a formyl group to the free amino group of methionyl-tRNA(fMet). The formyl group appears to play a dual role in the initiator identity of N-formylmethionyl-tRNA by promoting its recognition by IF2 and preventing the misappropriation of this tRNA by the elongation apparatus. The chain is Methionyl-tRNA formyltransferase from Acidiphilium cryptum (strain JF-5).